The chain runs to 926 residues: Periplasmic nitrate reductase (926 aa).

A signal peptide (tat-type signal) is located at residues 1-30 (MNRRDFIKSAAASAACASAGIAIPANLSAA). Residues 37–93 (WRWDKAACRFCGTGCGIMVATKEGKIVAVKGDPEAPVNRGLNCIKGYFNAKIMYGED) form the 4Fe-4S Mo/W bis-MGD-type domain. [4Fe-4S] cluster contacts are provided by C44, C47, C51, and C79. Residues K81, Q149, N174, C178, 211–218 (WGANMAEM), M419, Q423, N529, 554–555 (SD), K577, D604, and 816–825 (TGRVLEHWHS) contribute to the Mo-bis(molybdopterin guanine dinucleotide) site. W892 is a substrate binding site. Mo-bis(molybdopterin guanine dinucleotide)-binding residues include N900 and K917.

Belongs to the prokaryotic molybdopterin-containing oxidoreductase family. NasA/NapA/NarB subfamily. As to quaternary structure, component of the periplasmic nitrate reductase NapAB complex composed of NapA and NapB. The cofactor is [4Fe-4S] cluster. Mo-bis(molybdopterin guanine dinucleotide) is required as a cofactor. Post-translationally, predicted to be exported by the Tat system. The position of the signal peptide cleavage has not been experimentally proven.

It localises to the periplasm. The catalysed reaction is 2 Fe(II)-[cytochrome] + nitrate + 2 H(+) = 2 Fe(III)-[cytochrome] + nitrite + H2O. In terms of biological role, catalytic subunit of the periplasmic nitrate reductase complex NapAB. Receives electrons from NapB and catalyzes the reduction of nitrate to nitrite. The protein is Periplasmic nitrate reductase of Campylobacter curvus (strain 525.92).